Consider the following 122-residue polypeptide: Large ribosomal subunit protein uL18 (122 aa).

This sequence belongs to the universal ribosomal protein uL18 family. As to quaternary structure, part of the 50S ribosomal subunit; part of the 5S rRNA/L5/L18/L25 subcomplex. Contacts the 5S and 23S rRNAs.

In terms of biological role, this is one of the proteins that bind and probably mediate the attachment of the 5S RNA into the large ribosomal subunit, where it forms part of the central protuberance. This is Large ribosomal subunit protein uL18 from Dictyoglomus turgidum (strain DSM 6724 / Z-1310).